Reading from the N-terminus, the 201-residue chain is MSRYRGPRFKKIRRLGALPGLTSKRPRAGSDLRNQSRSGKKSQYRIRLEEKQKLRFHYGLTERQLLKYVRIAGKAKGSTGQVLLQLLEMRLDNILFRLGMALTIPQARQLVNHGHILVNGRIVDIPSYRCKPRDIITVKDEQNSRTLVQNLLDSSAPEELPNHLTLHTFQYEGLVNQIIDRKCVGLKINELLVVEYYSRQT.

The tract at residues 20-44 is disordered; that stretch reads GLTSKRPRAGSDLRNQSRSGKKSQY. The S4 RNA-binding domain occupies 89–152; it reads MRLDNILFRL…NSRTLVQNLL (64 aa).

This sequence belongs to the universal ribosomal protein uS4 family. In terms of assembly, part of the 30S ribosomal subunit. Contacts protein S5. The interaction surface between S4 and S5 is involved in control of translational fidelity.

It is found in the plastid. The protein localises to the chloroplast. One of the primary rRNA binding proteins, it binds directly to 16S rRNA where it nucleates assembly of the body of the 30S subunit. Its function is as follows. With S5 and S12 plays an important role in translational accuracy. The sequence is that of Small ribosomal subunit protein uS4c (rps4) from Arabis hirsuta (Hairy rock-cress).